Consider the following 290-residue polypeptide: ATP synthase gamma chain (290 aa).

The protein belongs to the ATPase gamma chain family. As to quaternary structure, F-type ATPases have 2 components, CF(1) - the catalytic core - and CF(0) - the membrane proton channel. CF(1) has five subunits: alpha(3), beta(3), gamma(1), delta(1), epsilon(1). CF(0) has three main subunits: a, b and c.

Its subcellular location is the cell inner membrane. Produces ATP from ADP in the presence of a proton gradient across the membrane. The gamma chain is believed to be important in regulating ATPase activity and the flow of protons through the CF(0) complex. The chain is ATP synthase gamma chain from Dinoroseobacter shibae (strain DSM 16493 / NCIMB 14021 / DFL 12).